The sequence spans 209 residues: ADP-ribose pyrophosphatase (209 aa).

Substrate contacts are provided by residues 28–29 (FF), 51–52 (RE), arginine 56, and arginine 79. One can recognise a Nudix hydrolase domain in the interval 55-193 (ERGHAAVLLP…KIDNAASVIA (139 aa)). Alanine 96 is a binding site for Mg(2+). The Nudix box motif lies at 97-118 (GMIEEGESVEDVARREAIEEAG). Methionine 98 is a binding site for substrate. 2 residues coordinate Mg(2+): glutamate 112 and glutamate 116. Residues 133–135 (SPG) and glutamate 139 contribute to the substrate site. The active-site Proton acceptor is glutamate 162. Glutamate 164 provides a ligand contact to Mg(2+).

The protein belongs to the Nudix hydrolase family. NudF subfamily. In terms of assembly, homodimer. Mg(2+) is required as a cofactor.

The enzyme catalyses ADP-D-ribose + H2O = D-ribose 5-phosphate + AMP + 2 H(+). With respect to regulation, inhibited by phosphorylated compounds such as AMP, ADP, ATP, 3-phosphoglyceric acid and PPi. Not inhibited by orthophosphate. Activity is high in cells grown in low glucose concentrations and decreases dramatically as glucose concentration increases. Acts on ADP-mannose and ADP-glucose as well as ADP-ribose. Prevents glycogen biosynthesis. The reaction catalyzed by this enzyme is a limiting step of the gluconeogenic process. The protein is ADP-ribose pyrophosphatase (nudF) of Escherichia coli O157:H7.